The sequence spans 122 residues: Small ribosomal subunit protein uS13 (122 aa).

Residues 97-122 (PVRGQRTHTNAKTRKGRSKLPIAGKK) are disordered.

The protein belongs to the universal ribosomal protein uS13 family. As to quaternary structure, part of the 30S ribosomal subunit. Forms a loose heterodimer with protein S19. Forms two bridges to the 50S subunit in the 70S ribosome.

Its function is as follows. Located at the top of the head of the 30S subunit, it contacts several helices of the 16S rRNA. In the 70S ribosome it contacts the 23S rRNA (bridge B1a) and protein L5 of the 50S subunit (bridge B1b), connecting the 2 subunits; these bridges are implicated in subunit movement. Contacts the tRNAs in the A and P-sites. The protein is Small ribosomal subunit protein uS13 of Wolbachia pipientis subsp. Culex pipiens (strain wPip).